Here is a 291-residue protein sequence, read N- to C-terminus: ATP synthase gamma chain (291 aa).

The protein belongs to the ATPase gamma chain family. In terms of assembly, F-type ATPases have 2 components, CF(1) - the catalytic core - and CF(0) - the membrane proton channel. CF(1) has five subunits: alpha(3), beta(3), gamma(1), delta(1), epsilon(1). CF(0) has three main subunits: a, b and c.

The protein resides in the cell inner membrane. Produces ATP from ADP in the presence of a proton gradient across the membrane. The gamma chain is believed to be important in regulating ATPase activity and the flow of protons through the CF(0) complex. The polypeptide is ATP synthase gamma chain (Nitratidesulfovibrio vulgaris (strain ATCC 29579 / DSM 644 / CCUG 34227 / NCIMB 8303 / VKM B-1760 / Hildenborough) (Desulfovibrio vulgaris)).